We begin with the raw amino-acid sequence, 296 residues long: 4-hydroxy-tetrahydrodipicolinate synthase (296 aa).

Threonine 49 serves as a coordination point for pyruvate. Residue tyrosine 137 is the Proton donor/acceptor of the active site. Lysine 166 functions as the Schiff-base intermediate with substrate in the catalytic mechanism. Residue valine 208 coordinates pyruvate.

Belongs to the DapA family. As to quaternary structure, homotetramer; dimer of dimers.

It localises to the cytoplasm. It catalyses the reaction L-aspartate 4-semialdehyde + pyruvate = (2S,4S)-4-hydroxy-2,3,4,5-tetrahydrodipicolinate + H2O + H(+). It participates in amino-acid biosynthesis; L-lysine biosynthesis via DAP pathway; (S)-tetrahydrodipicolinate from L-aspartate: step 3/4. Catalyzes the condensation of (S)-aspartate-beta-semialdehyde [(S)-ASA] and pyruvate to 4-hydroxy-tetrahydrodipicolinate (HTPA). The polypeptide is 4-hydroxy-tetrahydrodipicolinate synthase (Desulforamulus reducens (strain ATCC BAA-1160 / DSM 100696 / MI-1) (Desulfotomaculum reducens)).